The sequence spans 270 residues: Chlorophyll a-b binding protein 7, chloroplastic (270 aa).

The transit peptide at 1–42 (MASACASSTIAAVAFSSPSSRRNGSIVGTTKASFLGGRRLRV) directs the protein to the chloroplast. Chlorophyll b is bound at residue tryptophan 68. Chlorophyll a contacts are provided by phenylalanine 88, glutamate 107, and histidine 110. Arginine 112 contacts chlorophyll b. Residues 113–133 (WAMLGAAGIFIPELLTKIGIL) form a helical membrane-spanning segment. Glutamine 144 lines the chlorophyll a pocket. The chain crosses the membrane as a helical span at residues 146–166 (YFTDTTTLFIVELVLIGWAEG). Chlorophyll b is bound by residues isoleucine 155, glutamate 165, and arginine 168. Residues lysine 221, glutamate 222, asparagine 225, arginine 227, glutamine 239, and histidine 254 each contribute to the chlorophyll a site. The chain crosses the membrane as a helical span at residues 228–248 (LAMLAVMGAWFQHIYTGTGPI).

This sequence belongs to the light-harvesting chlorophyll a/b-binding (LHC) protein family. The LHC complex consists of chlorophyll a-b binding proteins. The cofactor is Binds at least 14 chlorophylls (8 Chl-a and 6 Chl-b) and carotenoids such as lutein and neoxanthin.. Post-translationally, photoregulated by reversible phosphorylation of its threonine residues.

It localises to the plastid. It is found in the chloroplast thylakoid membrane. Its function is as follows. The light-harvesting complex (LHC) functions as a light receptor, it captures and delivers excitation energy to photosystems with which it is closely associated. The chain is Chlorophyll a-b binding protein 7, chloroplastic (CAB7) from Solanum lycopersicum (Tomato).